Consider the following 106-residue polypeptide: Acylphosphatase-2 (106 aa).

An Acylphosphatase-like domain is found at 16 to 106 (SVDYEVFGTV…LEYSDFSIRY (91 aa)). Active-site residues include Arg31 and Asn49. Ser100 carries the phosphoserine modification.

This sequence belongs to the acylphosphatase family.

It catalyses the reaction an acyl phosphate + H2O = a carboxylate + phosphate + H(+). This chain is Acylphosphatase-2 (Acyp2), found in Mus musculus (Mouse).